A 155-amino-acid polypeptide reads, in one-letter code: MLGSIVVISMFMLLMNHPLAFTLSLFVQTLLICVMLKNVSLWISLILFLIFLGGILVMFIYVSSLSANEKFAVDLTSFMWVVPTIVLSFLVLNKNFMFMSPSSGYLYPTDFVIINFNVNSLTMLAYSFMVVYLFLALLLVIDFLNSNKKPLRSMI.

The next 4 membrane-spanning stretches (helical) occupy residues 1-21 (MLGSIVVISMFMLLMNHPLAF), 42-62 (WISLILFLIFLGGILVMFIYV), 71-91 (FAVDLTSFMWVVPTIVLSFLV), and 121-141 (LTMLAYSFMVVYLFLALLLVI).

Belongs to the complex I subunit 6 family.

Its subcellular location is the mitochondrion membrane. It carries out the reaction a ubiquinone + NADH + 5 H(+)(in) = a ubiquinol + NAD(+) + 4 H(+)(out). In terms of biological role, core subunit of the mitochondrial membrane respiratory chain NADH dehydrogenase (Complex I) that is believed to belong to the minimal assembly required for catalysis. Complex I functions in the transfer of electrons from NADH to the respiratory chain. The immediate electron acceptor for the enzyme is believed to be ubiquinone. This is NADH-ubiquinone oxidoreductase chain 6 (ND6) from Artemia franciscana (Brine shrimp).